A 320-amino-acid chain; its full sequence is Olfactory receptor 12D1 (320 aa).

The Extracellular portion of the chain corresponds to 1-23 (MLNTTSVTEFLLLGVTDIQELQP). Asparagine 3 carries N-linked (GlcNAc...) asparagine glycosylation. The helical transmembrane segment at 24-44 (FLFVVFLTIYFISVAGNGAIL) threads the bilayer. The Cytoplasmic segment spans residues 45-55 (MIVISDPRLHS). Residues 56–76 (PMYFFLGNLSCLDICYSSVTL) traverse the membrane as a helical segment. Over 77–97 (PKMLQNFLSAHKAISFLGCIS) the chain is Extracellular. A disulfide bridge links cysteine 95 with cysteine 177. Residues 98–118 (QLHFFHFLGSTEAMLLAVMAF) form a helical membrane-spanning segment. At 119 to 141 (DRFVAICKPLRYTVIMNPQLCTQ) the chain is on the cytoplasmic side. Residues 142 to 162 (MAITIWMIGFFHALLHSLMTS) traverse the membrane as a helical segment. Topologically, residues 163–203 (RLNFCGSNRIYHFFCDVKPLLKLACGNTELNQWLLSTVTGT) are extracellular. Residues 204–224 (IAMGPFFLTLLSYFYIITHLF) form a helical membrane-spanning segment. At 225–238 (FKTHSFSMLRKALS) the chain is on the cytoplasmic side. The chain crosses the membrane as a helical span at residues 239-259 (TCASHFMVVILLYAPVLFTYI). Over 260–270 (HHASGTSMDQD) the chain is Extracellular. The chain crosses the membrane as a helical span at residues 271–291 (RITAIMYTVVTPVLNPLIYTL). At 292 to 320 (RNKEVKGAFNRAMKRWLWPKEILKNSSEA) the chain is on the cytoplasmic side.

Belongs to the G-protein coupled receptor 1 family.

The protein localises to the cell membrane. Functionally, odorant receptor. This chain is Olfactory receptor 12D1 (OR12D1), found in Homo sapiens (Human).